A 185-amino-acid chain; its full sequence is Ribosome-recycling factor (185 aa).

The interval 138–185 (ALKKQEKDGEITEDEERRLEKEVQKVTDESTKKIDQMADNKRKEIIQG) is disordered.

This sequence belongs to the RRF family.

The protein localises to the cytoplasm. Responsible for the release of ribosomes from messenger RNA at the termination of protein biosynthesis. May increase the efficiency of translation by recycling ribosomes from one round of translation to another. The sequence is that of Ribosome-recycling factor from Lactobacillus delbrueckii subsp. bulgaricus (strain ATCC 11842 / DSM 20081 / BCRC 10696 / JCM 1002 / NBRC 13953 / NCIMB 11778 / NCTC 12712 / WDCM 00102 / Lb 14).